The following is a 103-amino-acid chain: Phospholipase A2 large subunit (103 aa).

Residues tryptophan 7, glycine 9, and glycine 11 each contribute to the Ca(2+) site. 4 disulfides stabilise this stretch: cysteine 8–cysteine 30, cysteine 29–cysteine 68, cysteine 36–cysteine 61, and cysteine 59–cysteine 96. Asparagine 16 is a glycosylation site (N-linked (GlcNAc...) asparagine). The active site involves histidine 33. Aspartate 34 contacts Ca(2+).

The protein belongs to the phospholipase A2 family. Group III subfamily. Heterodimer composed of a large subunit and a small subunit; disulfide-linked. Ca(2+) is required as a cofactor. In terms of tissue distribution, expressed by the venom gland.

It localises to the secreted. It catalyses the reaction a 1,2-diacyl-sn-glycero-3-phosphocholine + H2O = a 1-acyl-sn-glycero-3-phosphocholine + a fatty acid + H(+). In terms of biological role, phospholipase toxin, which catalyzes the calcium-dependent hydrolysis of the 2-acyl groups in 3-sn-phosphoglycerides. Inhibits both skeletal (RYR1) and cardiac (RYR2) ryanodine receptors (calcium release channels). Probably blocks ryanodine receptors by generating a lipid product. In Chersonesometrus fulvipes (Indian black scorpion), this protein is Phospholipase A2 large subunit.